A 546-amino-acid polypeptide reads, in one-letter code: Elongator complex protein 3 (546 aa).

Residues 81-371 form the Radical SAM core domain; it reads RTASGIAVVA…YRVQRDIPMP (291 aa). [4Fe-4S] cluster contacts are provided by Cys98, Cys108, and Cys111. Acetyl-CoA is bound by residues Lys163, 473–476, 496–498, and Tyr529; these read ELHV and FGM. An N-acetyltransferase domain is found at 395–546; that stretch reads TQCRDVRTRE…EGPYMVKRLQ (152 aa).

It belongs to the ELP3 family. Component of the elongator complex. The cofactor is [4Fe-4S] cluster.

The protein resides in the cytoplasm. It is found in the nucleus. The enzyme catalyses uridine(34) in tRNA + acetyl-CoA + S-adenosyl-L-methionine + H2O = 5-(carboxymethyl)uridine(34) in tRNA + 5'-deoxyadenosine + L-methionine + CoA + 2 H(+). It functions in the pathway tRNA modification; 5-methoxycarbonylmethyl-2-thiouridine-tRNA biosynthesis. Its function is as follows. Catalytic tRNA acetyltransferase subunit of the elongator complex which is required for multiple tRNA modifications, including mcm5U (5-methoxycarbonylmethyl uridine), mcm5s2U (5-methoxycarbonylmethyl-2-thiouridine), and ncm5U (5-carbamoylmethyl uridine). In the elongator complex, acts as a tRNA uridine(34) acetyltransferase by mediating formation of carboxymethyluridine in the wobble base at position 34 in tRNAs. This Gallus gallus (Chicken) protein is Elongator complex protein 3.